The primary structure comprises 61 residues: Potassium channel toxin alpha-KTx 6.9 (61 aa).

Residues 1–23 (MNAKFILLLLVVTTTTLLPDAKG) form the signal peptide. Disulfide bonds link cysteine 29-cysteine 50, cysteine 35-cysteine 55, cysteine 39-cysteine 57, and cysteine 45-cysteine 60.

It belongs to the short scorpion toxin superfamily. Potassium channel inhibitor family. Alpha-KTx 06 subfamily. As to expression, expressed by the venom gland.

The protein localises to the secreted. In terms of biological role, inhibits Kv1.2/KCNA2 and Kv1.3/KCNA3 voltage-gated potassium channels. The chain is Potassium channel toxin alpha-KTx 6.9 from Opistophthalmus carinatus (African yellow leg scorpion).